We begin with the raw amino-acid sequence, 429 residues long: Histidinol dehydrogenase (429 aa).

The NAD(+) site is built by tyrosine 131, glutamine 193, and asparagine 216. Substrate is bound by residues serine 239, glutamine 261, and histidine 264. Zn(2+) contacts are provided by glutamine 261 and histidine 264. Catalysis depends on proton acceptor residues glutamate 327 and histidine 328. Histidine 328, aspartate 361, glutamate 415, and histidine 420 together coordinate substrate. Position 361 (aspartate 361) interacts with Zn(2+). Position 420 (histidine 420) interacts with Zn(2+).

This sequence belongs to the histidinol dehydrogenase family. Zn(2+) is required as a cofactor.

The catalysed reaction is L-histidinol + 2 NAD(+) + H2O = L-histidine + 2 NADH + 3 H(+). The protein operates within amino-acid biosynthesis; L-histidine biosynthesis; L-histidine from 5-phospho-alpha-D-ribose 1-diphosphate: step 9/9. Catalyzes the sequential NAD-dependent oxidations of L-histidinol to L-histidinaldehyde and then to L-histidine. This Methanocaldococcus jannaschii (strain ATCC 43067 / DSM 2661 / JAL-1 / JCM 10045 / NBRC 100440) (Methanococcus jannaschii) protein is Histidinol dehydrogenase (hisD).